A 589-amino-acid polypeptide reads, in one-letter code: Probable ATP-dependent RNA helicase DDX59 (589 aa).

2 disordered regions span residues 1–36 and 48–98; these read MFVP…QLEG and KEAV…SKTQ. Basic and acidic residues predominate over residues 12-27; the sequence is NSNDDLKSCEAKKSKP. A Glycyl lysine isopeptide (Lys-Gly) (interchain with G-Cter in SUMO2) cross-link involves residue Lys26. Ser64 carries the post-translational modification Phosphoserine. Residues 80 to 91 show a composition bias toward basic and acidic residues; the sequence is GVKDSHPSEEPV. An HIT-type zinc finger spans residues 104 to 133; the sequence is GEPVCVVCGRYGEYICDKTDEDVCSLECKA. A phosphoserine mark is found at Ser156 and Ser160. Residues 203 to 231 carry the Q motif motif; it reads IDFEHCGFPETLNQNLKKSGYEVPTPIQM. A Helicase ATP-binding domain is found at 234-375; it reads IPVGLLGRDI…DQLLHNPVRI (142 aa). 247–254 is a binding site for ATP; the sequence is ADTGSGKT. The DEAD box signature appears at 323–326; sequence VKAD. A Helicase C-terminal domain is found at 399–549; the sequence is KKKKLFEILN…ILPPQLLNSP (151 aa).

This sequence belongs to the DEAD box helicase family. DDX59 subfamily. Interacts (via HIT-type zinc finger) with the RUVBL1/RUVBL2 complex in the presence of ADP.

Its subcellular location is the cytoplasm. It localises to the nucleus. The enzyme catalyses ATP + H2O = ADP + phosphate + H(+). In Rattus norvegicus (Rat), this protein is Probable ATP-dependent RNA helicase DDX59 (Ddx59).